Here is a 352-residue protein sequence, read N- to C-terminus: 3-isopropylmalate dehydrogenase (352 aa).

76 to 89 (GPKWENLPHEHKPE) provides a ligand contact to NAD(+). Substrate contacts are provided by Arg-96, Arg-106, Arg-134, and Asp-219. Residues Asp-219, Asp-243, and Asp-247 each contribute to the Mg(2+) site. 276-288 (GSAPDIAGQNKAN) lines the NAD(+) pocket.

Belongs to the isocitrate and isopropylmalate dehydrogenases family. LeuB type 1 subfamily. In terms of assembly, homodimer. The cofactor is Mg(2+). It depends on Mn(2+) as a cofactor.

It is found in the cytoplasm. The enzyme catalyses (2R,3S)-3-isopropylmalate + NAD(+) = 4-methyl-2-oxopentanoate + CO2 + NADH. It functions in the pathway amino-acid biosynthesis; L-leucine biosynthesis; L-leucine from 3-methyl-2-oxobutanoate: step 3/4. Functionally, catalyzes the oxidation of 3-carboxy-2-hydroxy-4-methylpentanoate (3-isopropylmalate) to 3-carboxy-4-methyl-2-oxopentanoate. The product decarboxylates to 4-methyl-2 oxopentanoate. The protein is 3-isopropylmalate dehydrogenase of Chlorobium chlorochromatii (strain CaD3).